Reading from the N-terminus, the 117-residue chain is Large ribosomal subunit protein uL18 (117 aa).

The protein belongs to the universal ribosomal protein uL18 family. As to quaternary structure, part of the 50S ribosomal subunit; part of the 5S rRNA/L5/L18/L25 subcomplex. Contacts the 5S and 23S rRNAs.

This is one of the proteins that bind and probably mediate the attachment of the 5S RNA into the large ribosomal subunit, where it forms part of the central protuberance. The polypeptide is Large ribosomal subunit protein uL18 (Polynucleobacter necessarius subsp. necessarius (strain STIR1)).